Reading from the N-terminus, the 279-residue chain is NADPH-dependent 7-cyano-7-deazaguanine reductase (279 aa).

Residue 86-88 (IES) coordinates substrate. 88–89 (SK) serves as a coordination point for NADPH. Cysteine 187 (thioimide intermediate) is an active-site residue. The active-site Proton donor is aspartate 194. 226–227 (HE) contributes to the substrate binding site. Residue 255 to 256 (RG) participates in NADPH binding.

This sequence belongs to the GTP cyclohydrolase I family. QueF type 2 subfamily. In terms of assembly, homodimer.

The protein resides in the cytoplasm. The enzyme catalyses 7-aminomethyl-7-carbaguanine + 2 NADP(+) = 7-cyano-7-deazaguanine + 2 NADPH + 3 H(+). Its pathway is tRNA modification; tRNA-queuosine biosynthesis. Catalyzes the NADPH-dependent reduction of 7-cyano-7-deazaguanine (preQ0) to 7-aminomethyl-7-deazaguanine (preQ1). This Haemophilus influenzae (strain PittGG) protein is NADPH-dependent 7-cyano-7-deazaguanine reductase.